Consider the following 669-residue polypeptide: PAN2-PAN3 deadenylation complex subunit PAN3 (669 aa).

Residues Met1–Gly10 are compositionally biased toward polar residues. Residues Met1–Glu25 form a disordered region. Residues Glu25–Asp54 form a C3H1-type zinc finger. The segment at Gln247–Ser519 is pseudokinase domain. Residues Arg298, Asp347–Ser354, and Ser408–Lys409 each bind ATP. The stretch at Asp520–Met558 forms a coiled coil. The segment at Val559–Lys669 is knob domain.

The protein belongs to the protein kinase superfamily. PAN3 family. As to quaternary structure, homodimer. Forms a heterotrimer with a catalytic subunit PAN2 to form the poly(A)-nuclease (PAN) deadenylation complex. Interacts (via PAM-2 motif) with poly(A)-binding protein PAB1 (via PABC domain), conferring substrate specificity of the enzyme complex.

Its subcellular location is the cytoplasm. Regulatory subunit of the poly(A)-nuclease (PAN) deadenylation complex, one of two cytoplasmic mRNA deadenylases involved in mRNA turnover. PAN specifically shortens poly(A) tails of RNA and the activity is stimulated by poly(A)-binding protein PAB1. PAN deadenylation is followed by rapid degradation of the shortened mRNA tails by the CCR4-NOT complex. Deadenylated mRNAs are then degraded by two alternative mechanisms, namely exosome-mediated 3'-5' exonucleolytic degradation, or deadenylation-dependent mRNA decaping and subsequent 5'-3' exonucleolytic degradation by XRN1. May also be involved in post-transcriptional maturation of mRNA poly(A) tails. PAN3 acts as a positive regulator for PAN activity, recruiting the catalytic subunit PAN2 to mRNA via its interaction with RNA and with PAB1. The polypeptide is PAN2-PAN3 deadenylation complex subunit PAN3 (Phaeosphaeria nodorum (strain SN15 / ATCC MYA-4574 / FGSC 10173) (Glume blotch fungus)).